A 285-amino-acid polypeptide reads, in one-letter code: Xanthoxin dehydrogenase (285 aa).

The residue at position 2 (Ser2) is an N-acetylserine.

The protein belongs to the short-chain dehydrogenases/reductases (SDR) family. In terms of tissue distribution, predominantly in roots and stems, and at lower levels in leaves and seeds.

The protein resides in the cytoplasm. The catalysed reaction is 2-cis,4-trans-xanthoxin + NAD(+) = 2-cis-(+)-abscisic aldehyde + NADH + H(+). It carries out the reaction 2-trans,4-trans-xanthoxin + NAD(+) = 2-trans-(+)-abscisic aldehyde + NADH + H(+). In terms of biological role, involved in the biosynthesis of abscisic acid. Catalyzes the conversion of xanthoxin to abscisic aldehyde. The chain is Xanthoxin dehydrogenase from Arabidopsis thaliana (Mouse-ear cress).